The sequence spans 93 residues: Early E3A 10.5 kDa glycoprotein (93 aa).

N-linked (GlcNAc...) asparagine; by host glycosylation occurs at Asn-3. A helical membrane pass occupies residues 34–55 (MWWFSIALMFVCLIIMWLICCL).

This sequence belongs to the adenoviridae E3A-1 family. In terms of processing, N-glycosylated and probably also O-glycosylated.

It is found in the host nucleus membrane. This chain is Early E3A 10.5 kDa glycoprotein, found in Homo sapiens (Human).